Consider the following 66-residue polypeptide: Beta-defensin 13 (66 aa).

The signal sequence occupies residues 1 to 22 (MRIFSLIVAGLVLLIQLHPAKG). Intrachain disulfides connect Cys30–Cys59, Cys37–Cys51, and Cys41–Cys60.

It belongs to the beta-defensin family.

It localises to the secreted. Has antibacterial activity. This is Beta-defensin 13 (Defb13) from Rattus norvegicus (Rat).